A 172-amino-acid chain; its full sequence is Transcriptional activator protein (172 aa).

The short motif at 56 to 71 (KAQHRIAKHKAIRRRR) is the Nuclear localization signal element. A zinc finger lies at 76 to 93 (CGCSIFYHIKCADHGFTH). The tract at residues 119 to 172 (DHAGGRSSIHTDKDIPHPSQVQSQPQESTGSPQSIPELPSLDDIDSSFWDDIFK) is disordered. Polar residues predominate over residues 137 to 152 (SQVQSQPQESTGSPQS). The tract at residues 158–172 (SLDDIDSSFWDDIFK) is transactivation.

This sequence belongs to the geminiviridae transcriptional activator protein family. Monomer. Homodimer. Homooligomer. Self-interaction correlates with nuclear localization and efficient activation of transcription. Monomers suppress local silencing by interacting with and inactivating host adenosine kinase 2 (ADK2) in the cytoplasm. Interacts with and inhibits host SNF1 kinase. Binds to ssDNA. In terms of processing, phosphorylated.

It localises to the host nucleus. It is found in the host cytoplasm. Its function is as follows. Strong activator of the late viral genes promoters. Enhances the expression of the capsid protein and nuclear shuttle protein. Acts as a suppressor of RNA-mediated gene silencing, also known as post-transcriptional gene silencing (PTGS), a mechanism of plant viral defense that limits the accumulation of viral RNAs. Suppresses the host RNA silencing by inhibiting adenosine kinase 2 (ADK2), a kinase involved in a general methylation pathway. Also suppresses the host basal defense by interacting with and inhibiting SNF1 kinase, a key regulator of cell metabolism implicated in innate antiviral defense. Determines pathogenicity. This Bean golden yellow mosaic virus (isolate Puerto Rico-Japan) (BGYMV) protein is Transcriptional activator protein.